The chain runs to 173 residues: Nanos homolog 3 (173 aa).

Residues 23–51 form a disordered region; the sequence is KEGPETRLSPQPEPEPMLEPDQKRSLESS. The Nanos-type zinc finger occupies 57–111; that stretch reads LCSFCKHNGESRAIYQSHVLKDEAGRVLCPILRDYVCPQCGATRERAHTRRFCPL. Residues cysteine 58, cysteine 61, histidine 74, cysteine 85, cysteine 93, cysteine 96, histidine 104, and cysteine 109 each contribute to the Zn(2+) site. 2 consecutive short sequence motifs (C2HC) follow at residues 58–85 and 93–109; these read CSFC…RVLC and CPQC…RRFC. The segment at 123–173 is disordered; sequence TTRNSAGKKLVRPDKAKTQDTGHRRGGGGGAGFRGAGKSEPSPSCSPSMST. Basic and acidic residues predominate over residues 133–145; the sequence is VRPDKAKTQDTGH. The span at 161 to 173 shows a compositional bias: low complexity; it reads SEPSPSCSPSMST.

The protein belongs to the nanos family. As to quaternary structure, binds mRNA from germ cells. Interacts with PUM2. Ovary, testis and brain (at protein level). In the ovaries, expressed during multiple stages of oogenesis, including primordial, primary, secondary and antral follicles with the highest expression in the oocytes. In the testis, expressed in germ cells, type A spermatogonia (SA), primary spermatocytes (S1), round spermatids (S3) and elongated spermatids.

The protein localises to the nucleus. It localises to the cytoplasm. It is found in the stress granule. The protein resides in the P-body. Plays a role in the maintenance of the undifferentiated state of germ cells regulating the spermatogonia cell cycle and inducing a prolonged transit in G1 phase. Affects cell proliferation probably by repressing translation of specific mRNAs. Maintains the germ cell lineage by suppressing both Bax-dependent and -independent apoptotic pathways. Essential in the early stage embryo to protect the migrating primordial germ cells (PGCs) from apoptosis. In Homo sapiens (Human), this protein is Nanos homolog 3 (NANOS3).